The sequence spans 368 residues: Phosphate acyltransferase (368 aa).

It belongs to the PlsX family. As to quaternary structure, homodimer. Probably interacts with PlsY.

It is found in the cytoplasm. The enzyme catalyses a fatty acyl-[ACP] + phosphate = an acyl phosphate + holo-[ACP]. Its pathway is lipid metabolism; phospholipid metabolism. Its function is as follows. Catalyzes the reversible formation of acyl-phosphate (acyl-PO(4)) from acyl-[acyl-carrier-protein] (acyl-ACP). This enzyme utilizes acyl-ACP as fatty acyl donor, but not acyl-CoA. The protein is Phosphate acyltransferase of Methylibium petroleiphilum (strain ATCC BAA-1232 / LMG 22953 / PM1).